The sequence spans 403 residues: Argininosuccinate synthase (403 aa).

10 to 18 lines the ATP pocket; the sequence is AYSGGLDTS. Residue Tyr87 participates in L-citrulline binding. Gly117 lines the ATP pocket. L-aspartate-binding residues include Thr119, Asn123, and Asp124. Asn123 is an L-citrulline binding site. L-citrulline contacts are provided by Arg127, Ser175, Ser184, Glu260, and Tyr272.

It belongs to the argininosuccinate synthase family. Type 1 subfamily. Homotetramer.

The protein localises to the cytoplasm. The enzyme catalyses L-citrulline + L-aspartate + ATP = 2-(N(omega)-L-arginino)succinate + AMP + diphosphate + H(+). It participates in amino-acid biosynthesis; L-arginine biosynthesis; L-arginine from L-ornithine and carbamoyl phosphate: step 2/3. This is Argininosuccinate synthase from Bacillus pumilus (strain SAFR-032).